Reading from the N-terminus, the 301-residue chain is MFGNPAMTGLHQFTMWEHYFTGSIYLVLGCVVFSLCGMCIIFLARQSPKPRRKYAILIHVLITAMAVNGGDPAHASSSIVGRWLYGSVGCQLMGFWGFFGGMSHIWMLFAFAMERYMAVCHREFYQQMPSVYYSIIVGLMYTFGTFWATMPLLGWASYGLEVHGTSCTINYSVSDESYQSYVFFLAIFSFIFPMVSGWYAISKAWSGLSAIPDAEKEKDKDILSEEQLTALAGAFILISLISWSGFGYVAIYSALTHGGAQLSHLRGHVPPIMSKTGCALFPLLIFLLTARSLPKSDTKKP.

Residues 1-17 (MFGNPAMTGLHQFTMWE) lie on the Extracellular side of the membrane. Residues 18 to 43 (HYFTGSIYLVLGCVVFSLCGMCIIFL) form a helical membrane-spanning segment. At 44-54 (ARQSPKPRRKY) the chain is on the cytoplasmic side. The helical transmembrane segment at 55 to 76 (AILIHVLITAMAVNGGDPAHAS) threads the bilayer. At 77–94 (SSIVGRWLYGSVGCQLMG) the chain is on the extracellular side. Residues 95–120 (FWGFFGGMSHIWMLFAFAMERYMAVC) traverse the membrane as a helical segment. Residues 121-132 (HREFYQQMPSVY) are Cytoplasmic-facing. A helical transmembrane segment spans residues 133 to 153 (YSIIVGLMYTFGTFWATMPLL). Residues 154–180 (GWASYGLEVHGTSCTINYSVSDESYQS) lie on the Extracellular side of the membrane. The N-linked (GlcNAc...) asparagine glycan is linked to asparagine 170. Residues 181 to 208 (YVFFLAIFSFIFPMVSGWYAISKAWSGL) form a helical membrane-spanning segment. The Cytoplasmic portion of the chain corresponds to 209 to 230 (SAIPDAEKEKDKDILSEEQLTA). Residues 231 to 255 (LAGAFILISLISWSGFGYVAIYSAL) form a helical membrane-spanning segment. The Extracellular segment spans residues 256–264 (THGGAQLSH). Residues 265 to 289 (LRGHVPPIMSKTGCALFPLLIFLLT) form a helical membrane-spanning segment. Lysine 275 bears the N6-(retinylidene)lysine mark. At 290-301 (ARSLPKSDTKKP) the chain is on the cytoplasmic side.

Belongs to the G-protein coupled receptor 1 family. Opsin subfamily. Mainly stored in myeloid bodies of the inner segments.

The protein localises to the membrane. Its function is as follows. Retinochrome is capable of acting as an effective catalyst in the light to convert various isomers of retinal into 11-cis, the form that is required by opsin to resynthesize rhodopsin. The polypeptide is Retinochrome (Todarodes pacificus (Japanese flying squid)).